A 294-amino-acid chain; its full sequence is Protein C3orf33 homolog (294 aa).

Ala-2 carries the N-acetylalanine modification. A helical transmembrane segment spans residues 36–53 (LVQNISTGMAIAGIMLLI). Positions 244 to 271 (KPAGADLGSTKDSYHDSRRRASGKGKDS) are disordered.

It is found in the membrane. Its function is as follows. May play a role in transcription regulation. The chain is Protein C3orf33 homolog from Mus musculus (Mouse).